The sequence spans 354 residues: 3-isopropylmalate dehydrogenase (354 aa).

Gly76 to Glu87 is an NAD(+) binding site. Residues Arg94, Arg104, Arg130, and Asp215 each coordinate substrate. 3 residues coordinate Mg(2+): Asp215, Asp239, and Asp243. Residue Gly273–Asn285 coordinates NAD(+).

It belongs to the isocitrate and isopropylmalate dehydrogenases family. LeuB type 1 subfamily. As to quaternary structure, homodimer. Mg(2+) serves as cofactor. It depends on Mn(2+) as a cofactor.

It is found in the cytoplasm. It catalyses the reaction (2R,3S)-3-isopropylmalate + NAD(+) = 4-methyl-2-oxopentanoate + CO2 + NADH. The protein operates within amino-acid biosynthesis; L-leucine biosynthesis; L-leucine from 3-methyl-2-oxobutanoate: step 3/4. Its function is as follows. Catalyzes the oxidation of 3-carboxy-2-hydroxy-4-methylpentanoate (3-isopropylmalate) to 3-carboxy-4-methyl-2-oxopentanoate. The product decarboxylates to 4-methyl-2 oxopentanoate. This chain is 3-isopropylmalate dehydrogenase, found in Bacillus cereus (strain ATCC 14579 / DSM 31 / CCUG 7414 / JCM 2152 / NBRC 15305 / NCIMB 9373 / NCTC 2599 / NRRL B-3711).